A 1034-amino-acid chain; its full sequence is Presequence protease, mitochondrial (1034 aa).

The N-terminal 26 residues, 1 to 26, are a transit peptide targeting the mitochondrion; it reads MLKTRLKQSRAISRVVRRYACSHPIS. Position 97 (histidine 97) interacts with Zn(2+). The active-site Proton acceptor is the glutamate 100. Residue histidine 101 coordinates Zn(2+). Residue glutamate 173 is part of the active site. Position 198 (glutamate 198) interacts with Zn(2+).

Belongs to the peptidase M16 family. PreP subfamily. Monomer and homodimer; homodimerization is induced by binding of the substrate. Zn(2+) is required as a cofactor.

The protein localises to the mitochondrion intermembrane space. The protein resides in the mitochondrion matrix. Degrades mitochondrial transit peptides after their cleavage in the intermembrane space or in the matrix, and presequence peptides; clearance of these peptides is required to keep the presequence processing machinery running. Preferentially cleaves the N-terminal side of paired basic amino acid residues. Also degrades other unstructured peptides. May function as an ATP-dependent peptidase as opposed to a metalloendopeptidase. The polypeptide is Presequence protease, mitochondrial (CYM1) (Candida albicans (strain SC5314 / ATCC MYA-2876) (Yeast)).